Reading from the N-terminus, the 717-residue chain is Photosystem I P700 chlorophyll a apoprotein A1 (717 aa).

8 helical membrane passes run 59–82, 145–168, 184–208, 280–298, 335–358, 374–400, 422–444, and 520–538; these read VFRA…FHGA, LYCT…FHYH, LNHH…HVSL, TAHH…GHMY, WHAQ…HHMY, LSLF…IFMV, AIVS…LYIH, and FLVH…LILL. The [4Fe-4S] cluster site is built by C562 and C571. The next 2 membrane-spanning stretches (helical) occupy residues 578–599 and 653–675; these read HVFL…HFSW and LSAY…MFLF. Chlorophyll a' is bound at residue H664. M672 and Y680 together coordinate chlorophyll a. W681 lines the phylloquinone pocket. The helical transmembrane segment at 713 to 717 threads the bilayer; that stretch reads AVGVA.

This sequence belongs to the PsaA/PsaB family. As to quaternary structure, the PsaA/B heterodimer binds the P700 chlorophyll special pair and subsequent electron acceptors. PSI consists of a core antenna complex that captures photons, and an electron transfer chain that converts photonic excitation into a charge separation. The eukaryotic PSI reaction center is composed of at least 11 subunits. Requires P700 is a chlorophyll a/chlorophyll a' dimer, A0 is one or more chlorophyll a, A1 is one or both phylloquinones and FX is a shared 4Fe-4S iron-sulfur center. as cofactor.

The protein localises to the plastid. The protein resides in the chloroplast thylakoid membrane. The catalysed reaction is reduced [plastocyanin] + hnu + oxidized [2Fe-2S]-[ferredoxin] = oxidized [plastocyanin] + reduced [2Fe-2S]-[ferredoxin]. In terms of biological role, psaA and PsaB bind P700, the primary electron donor of photosystem I (PSI), as well as the electron acceptors A0, A1 and FX. PSI is a plastocyanin-ferredoxin oxidoreductase, converting photonic excitation into a charge separation, which transfers an electron from the donor P700 chlorophyll pair to the spectroscopically characterized acceptors A0, A1, FX, FA and FB in turn. Oxidized P700 is reduced on the lumenal side of the thylakoid membrane by plastocyanin. This Cycas revoluta (Sago palm) protein is Photosystem I P700 chlorophyll a apoprotein A1.